The primary structure comprises 399 residues: S-adenosylmethionine synthase (399 aa).

Residue histidine 19 coordinates ATP. Position 21 (aspartate 21) interacts with Mg(2+). Glutamate 47 serves as a coordination point for K(+). Residues glutamate 60 and glutamine 103 each contribute to the L-methionine site. Positions 103 to 113 (QSPDIAQGVNQ) are flexible loop. ATP contacts are provided by residues 179–181 (DGK), 246–247 (RF), aspartate 255, 261–262 (RK), alanine 278, and lysine 282. Aspartate 255 is an L-methionine binding site. Lysine 286 contacts L-methionine.

Belongs to the AdoMet synthase family. In terms of assembly, homotetramer; dimer of dimers. It depends on Mg(2+) as a cofactor. K(+) serves as cofactor.

Its subcellular location is the cytoplasm. The enzyme catalyses L-methionine + ATP + H2O = S-adenosyl-L-methionine + phosphate + diphosphate. Its pathway is amino-acid biosynthesis; S-adenosyl-L-methionine biosynthesis; S-adenosyl-L-methionine from L-methionine: step 1/1. Catalyzes the formation of S-adenosylmethionine (AdoMet) from methionine and ATP. The overall synthetic reaction is composed of two sequential steps, AdoMet formation and the subsequent tripolyphosphate hydrolysis which occurs prior to release of AdoMet from the enzyme. The chain is S-adenosylmethionine synthase from Halalkalibacterium halodurans (strain ATCC BAA-125 / DSM 18197 / FERM 7344 / JCM 9153 / C-125) (Bacillus halodurans).